We begin with the raw amino-acid sequence, 239 residues long: 1-(5-phosphoribosyl)-5-[(5-phosphoribosylamino)methylideneamino] imidazole-4-carboxamide isomerase (239 aa).

Asp-8 (proton acceptor) is an active-site residue. Residue Asp-129 is the Proton donor of the active site.

The protein belongs to the HisA/HisF family.

It is found in the cytoplasm. The enzyme catalyses 1-(5-phospho-beta-D-ribosyl)-5-[(5-phospho-beta-D-ribosylamino)methylideneamino]imidazole-4-carboxamide = 5-[(5-phospho-1-deoxy-D-ribulos-1-ylimino)methylamino]-1-(5-phospho-beta-D-ribosyl)imidazole-4-carboxamide. It functions in the pathway amino-acid biosynthesis; L-histidine biosynthesis; L-histidine from 5-phospho-alpha-D-ribose 1-diphosphate: step 4/9. This Bacillus cereus (strain B4264) protein is 1-(5-phosphoribosyl)-5-[(5-phosphoribosylamino)methylideneamino] imidazole-4-carboxamide isomerase.